The chain runs to 200 residues: NADH-quinone oxidoreductase subunit C (200 aa).

Belongs to the complex I 30 kDa subunit family. As to quaternary structure, NDH-1 is composed of 14 different subunits. Subunits NuoB, C, D, E, F, and G constitute the peripheral sector of the complex.

It localises to the cell inner membrane. It catalyses the reaction a quinone + NADH + 5 H(+)(in) = a quinol + NAD(+) + 4 H(+)(out). NDH-1 shuttles electrons from NADH, via FMN and iron-sulfur (Fe-S) centers, to quinones in the respiratory chain. The immediate electron acceptor for the enzyme in this species is believed to be ubiquinone. Couples the redox reaction to proton translocation (for every two electrons transferred, four hydrogen ions are translocated across the cytoplasmic membrane), and thus conserves the redox energy in a proton gradient. This chain is NADH-quinone oxidoreductase subunit C, found in Rhizobium etli (strain ATCC 51251 / DSM 11541 / JCM 21823 / NBRC 15573 / CFN 42).